The sequence spans 561 residues: Potassium-transporting ATPase potassium-binding subunit (561 aa).

Transmembrane regions (helical) follow at residues 4 to 24 (IVMQDVFFVVLLLVLAVPLGI), 65 to 85 (AVSVLAFSAVGFVFVMAVLML), 133 to 153 (IGLTVQNFVSAATGIAVLFAV), 177 to 197 (LYILLPLSLILALLLVSQGVV), 253 to 273 (FTNLIEMLAILLIPVALVVMF), 285 to 305 (AIMTAMMIVFVIGVVAITISE), 380 to 400 (GLYGMIGFIILTVFIAGLLVG), 417 to 437 (MVCLLILVPPLLTLFGTAVAV), 484 to 504 (MVGAVMMLLARFIPLVAALYL), and 528 to 548 (FIGLLIGVVVLVGALSFLPAL).

It belongs to the KdpA family. The system is composed of three essential subunits: KdpA, KdpB and KdpC.

It localises to the cell membrane. Part of the high-affinity ATP-driven potassium transport (or Kdp) system, which catalyzes the hydrolysis of ATP coupled with the electrogenic transport of potassium into the cytoplasm. This subunit binds the extracellular potassium ions and delivers the ions to the membrane domain of KdpB through an intramembrane tunnel. This is Potassium-transporting ATPase potassium-binding subunit from Listeria monocytogenes serovar 1/2a (strain ATCC BAA-679 / EGD-e).